A 92-amino-acid polypeptide reads, in one-letter code: DNA-binding protein HU (92 aa).

Residues 58–92 are disordered; the sequence is AGTARNPRTGETVNRPASKTARFQVGEGLKSSLNS.

It belongs to the bacterial histone-like protein family. Homodimer.

In terms of biological role, histone-like DNA-binding protein which is capable of wrapping DNA to stabilize it, and thus to prevent its denaturation under extreme environmental conditions. This Caulobacter vibrioides (strain ATCC 19089 / CIP 103742 / CB 15) (Caulobacter crescentus) protein is DNA-binding protein HU (hup).